A 165-amino-acid chain; its full sequence is PTS system glucose-specific EIIA component (165 aa).

One can recognise a PTS EIIA type-1 domain in the interval aspartate 33–asparagine 137. 2 residues coordinate Zn(2+): histidine 70 and histidine 85. Histidine 85 (tele-phosphohistidine intermediate; for EIIA activity) is an active-site residue. Histidine 85 carries the post-translational modification Phosphohistidine; by HPr.

As to quaternary structure, heterodimer with glycerol kinase (glpk). It depends on Zn(2+) as a cofactor.

It localises to the cytoplasm. Functionally, the phosphoenolpyruvate-dependent sugar phosphotransferase system (sugar PTS), a major carbohydrate active transport system, catalyzes the phosphorylation of incoming sugar substrates concomitantly with their translocation across the cell membrane. The enzyme II complex composed of PtsG and Crr is involved in glucose transport. The protein is PTS system glucose-specific EIIA component (crr) of Bacillus cereus (strain ATCC 14579 / DSM 31 / CCUG 7414 / JCM 2152 / NBRC 15305 / NCIMB 9373 / NCTC 2599 / NRRL B-3711).